Consider the following 189-residue polypeptide: Pyridoxal 5'-phosphate synthase subunit PdxT (189 aa).

Position 47–49 (47–49) interacts with L-glutamine; it reads GES. Cys-79 functions as the Nucleophile in the catalytic mechanism. L-glutamine-binding positions include Arg-105 and 132–133; that span reads IR. Active-site charge relay system residues include His-168 and Glu-170.

Belongs to the glutaminase PdxT/SNO family. In the presence of PdxS, forms a dodecamer of heterodimers. Only shows activity in the heterodimer.

The catalysed reaction is aldehydo-D-ribose 5-phosphate + D-glyceraldehyde 3-phosphate + L-glutamine = pyridoxal 5'-phosphate + L-glutamate + phosphate + 3 H2O + H(+). It catalyses the reaction L-glutamine + H2O = L-glutamate + NH4(+). It functions in the pathway cofactor biosynthesis; pyridoxal 5'-phosphate biosynthesis. Functionally, catalyzes the hydrolysis of glutamine to glutamate and ammonia as part of the biosynthesis of pyridoxal 5'-phosphate. The resulting ammonia molecule is channeled to the active site of PdxS. This is Pyridoxal 5'-phosphate synthase subunit PdxT from Methanocorpusculum labreanum (strain ATCC 43576 / DSM 4855 / Z).